A 553-amino-acid polypeptide reads, in one-letter code: Putative transport protein KPK_0013 (553 aa).

5 helical membrane-spanning segments follow: residues 4–24 (IALT…IGNV), 28–48 (GVGF…HFVD), 65–85 (FGLI…FFAS), 95–115 (LFAI…HKLF), and 158–178 (MSYA…MWLV). RCK C-terminal domains lie at 192 to 276 (RFEE…VIGQ) and 279 to 361 (ATSL…ELGN). Helical transmembrane passes span 371 to 391 (MLPV…PLFI), 403 to 425 (AGGP…LYWF), 437 to 457 (LGIV…FVAT), 464 to 484 (LSWI…VGIL), 493 to 513 (YLTL…LAFA), and 532 to 552 (PLVM…FWGL).

Belongs to the AAE transporter (TC 2.A.81) family. YidE subfamily.

Its subcellular location is the cell membrane. This is Putative transport protein KPK_0013 from Klebsiella pneumoniae (strain 342).